We begin with the raw amino-acid sequence, 546 residues long: Peptidoglycan transport ATP-binding protein YejF (546 aa).

ABC transporter domains are found at residues 12–261 and 291–530; these read VRDL…RHLL and IKAG…KALL. Residues 46–53 and 323–330 each bind ATP; these read GESGSGKS and GESGSGKT.

Belongs to the ABC transporter superfamily. As to quaternary structure, the complex is composed of one ATP-binding protein (YejF), two transmembrane proteins (YejB and YejE) and a solute-binding protein (YepA or YejA).

The protein resides in the cell inner membrane. Its function is as follows. Part of the ABC transporter complex YejBEF-YepA involved in the uptake of muropeptides, the breakdown products of cell wall peptidoglycan. The import of muropeptides into the cell enables peptidoglycan recycling, which is vital for cell wall integrity in this bacterium. Is also probably part of the ABC transporter complex YejABEF, which is likely involved in broad-spectrum peptide import. Responsible for energy coupling to the transport system. This chain is Peptidoglycan transport ATP-binding protein YejF, found in Agrobacterium fabrum (strain C58 / ATCC 33970) (Agrobacterium tumefaciens (strain C58)).